Here is a 482-residue protein sequence, read N- to C-terminus: MVAMFQEDNGTSSVASSPLQVFSTMSLNRPTLLASSSPFHCLKDLKPEERGLYLIHLLLTCANHVASGSLQNANAALEQLSHLASPDGDTMQRIAAYFTEALANRILKSWPGLYKALNATQTRTNNVSEEIHVRRLFFEMFPILKVSYLLTNRAILEAMEGEKMVHVIDLDASEPAQWLALLQAFNSRPEGPPHLRITGVHHQKEVLEQMAHRLIEEAEKLDIPFQFNPVVSRLDCLNVEQLRVKTGEALAVSSVLQLHTFLASDDDLMRKNCALRFQNNPSGVDLQRVLMMSHGSAAEARENDMSNNNGYSPSGDSASSLPLPSSGRTDSFLNAIWGLSPKVMVVTEQDSDHNGSTLMERLLESLYTYAALFDCLETKVPRTSQDRIKVEKMLFGEEIKNIISCEGFERRERHEKLEKWSQRIDLAGFGNVPLSYYAMLQARRLLQGCGFDGYRIKEESGCAVICWQDRPLYSVSAWRCRK.

One can recognise a GRAS domain in the interval 45-479 (LKPEERGLYL…RPLYSVSAWR (435 aa)). A leucine repeat I (LRI) region spans residues 52-115 (LYLIHLLLTC…ILKSWPGLYK (64 aa)). The segment at 134–199 (RRLFFEMFPI…EGPPHLRITG (66 aa)) is VHIID. The VHIID motif lies at 165-169 (VHVID). Positions 209–241 (QMAHRLIEEAEKLDIPFQFNPVVSRLDCLNVEQ) are leucine repeat II (LRII). The tract at residues 250–401 (LAVSSVLQLH…KMLFGEEIKN (152 aa)) is PFYRE. The interval 302–324 (ENDMSNNNGYSPSGDSASSLPLP) is disordered. Polar residues predominate over residues 305–324 (MSNNNGYSPSGDSASSLPLP). The SAW stretch occupies residues 404 to 479 (SCEGFERRER…RPLYSVSAWR (76 aa)).

It belongs to the GRAS family. Binds to zinc finger proteins MGP/IDD3, IDD4, IDD5, BIB/IDD9 and JKD/IDD10. Expressed in seedlings, root epidermis, leaves, flowers and siliques.

It is found in the nucleus. Functionally, probable transcription factor involved in plant development. The chain is Scarecrow-like protein 3 from Arabidopsis thaliana (Mouse-ear cress).